The primary structure comprises 615 residues: Gluconate 2-dehydrogenase flavoprotein (615 aa).

The first 22 residues, 1-22 (MERGERVSVPVSGYSRGEGVTV), serve as a signal peptide directing secretion. Histidine 542 functions as the Proton acceptor in the catalytic mechanism.

It belongs to the GMC oxidoreductase family. In terms of assembly, heterotrimer. FAD is required as a cofactor.

Its subcellular location is the cell membrane. The catalysed reaction is D-gluconate + A = 2-dehydro-D-gluconate + AH2. Functionally, part of the heterotrimer that catalyzes the conversion of D-gluconate to 2-dehydro-D-gluconate. This subunit functions as the dehydrogenase. The polypeptide is Gluconate 2-dehydrogenase flavoprotein (Pantoea cypripedii (Pectobacterium cypripedii)).